The sequence spans 578 residues: Acyl-CoA synthetase ACTT5 (578 aa).

211–222 provides a ligand contact to AMP; that stretch reads RLTTSGTTGLPK. The segment at 472 to 551 is AMP-binding; sequence ELEAALLQAK…DEIPRSPTGK (80 aa).

The protein belongs to the ATP-dependent AMP-binding enzyme family.

The protein operates within mycotoxin biosynthesis. In terms of biological role, acyl-CoA synthetase; part of the gene clusters that mediate the biosynthesis of the host-selective toxins (HSTs) ACT-toxins responsible for brown spot of tangerine disease by the tangerine pathotype which affects tangerines and mandarins. ACT-toxins consist of three moieties, 9,10-epoxy-8-hydroxy-9-methyl-decatrienoic acid (EDA), valine and a polyketide. ACT-toxin I is toxic to both citrus and pear; toxin II the 5''-deoxy derivative of ACT-toxin I, is highly toxic to pear and slightly toxic to citrus. On cellular level, ACT-toxins affect plasma membrane of susceptible cells and cause a sudden increase in loss of K(+) after a few minutes of toxin treatment. The acyl-CoA ligase ACTT1, the hydrolase ACTT2, the enoyl-CoA hydratases ACTT3 and ACTT6, and the acyl-CoA synthetase ACTT5 are all involved in the biosynthesis of the AK-, AF- and ACT-toxin common 9,10-epoxy-8-hydroxy-9-methyl-decatrienoic acid (EDA) structural moiety. The exact role of each enzyme, and of additional enzymes identified within the AF-toxin clusters have still to be determined. On the other hand, ACTTS1 to ACTTS4 are specific to the tangerine pathotype. The function of ACTTS3 is to elongate the polyketide chain portion of ACT-toxin that is unique to this toxin. The enoyl-reductase ACTTS2 might complement the missing enoyl-reductase (ER) domain in ACTTS3 in the synthesis of the polyketide portion of ACT-toxin. The roles of the nonribosomal peptide synthetases-related proteins ACTTS1 and ACTTS4 have also still not been elucidated. This chain is Acyl-CoA synthetase ACTT5, found in Alternaria alternata (Alternaria rot fungus).